A 478-amino-acid chain; its full sequence is Multidrug resistance outer membrane protein MdtQ (478 aa).

The N-terminal stretch at 1-21 (MNRDSFYPAIACFPLLLMLAG) is a signal peptide. Residue cysteine 22 is the site of N-palmitoyl cysteine attachment. Cysteine 22 carries S-diacylglycerol cysteine lipidation.

It belongs to the outer membrane factor (OMF) (TC 1.B.17) family.

It is found in the cell outer membrane. Functionally, could be involved in resistance to puromycin, acriflavine and tetraphenylarsonium chloride. This is Multidrug resistance outer membrane protein MdtQ (mdtQ) from Escherichia coli O157:H7.